The chain runs to 924 residues: Probable dipeptidyl-aminopeptidase B (924 aa).

The segment covering 1-12 has biased composition (polar residues); it reads MPSTYSDDNTLR. The tract at residues 1 to 102 is disordered; sequence MPSTYSDDNT…RSNQRSSADG (102 aa). Topologically, residues 1–111 are cytoplasmic; it reads MPSTYSDDNT…GQRMDRSLRR (111 aa). The segment covering 14–23 has biased composition (basic and acidic residues); that stretch reads GLDRFRDHSP. The span at 31–43 shows a compositional bias: polar residues; that stretch reads SQETDSTVSTTSI. The segment covering 47-58 has biased composition (basic and acidic residues); sequence RIQERLDTKEFP. Positions 87 to 100 are enriched in low complexity; sequence NASPSSRSNQRSSA. A helical; Signal-anchor for type II membrane protein transmembrane segment spans residues 112–132; sequence WLFIVSGALVATWVIGLIFFV. Residues 133 to 924 are Vacuolar-facing; that stretch reads SSKAYKPSSS…GMKRRALPTA (792 aa). Residues asparagine 231 and asparagine 364 are each glycosylated (N-linked (GlcNAc...) asparagine). The Charge relay system role is filled by serine 768. The N-linked (GlcNAc...) asparagine glycan is linked to asparagine 827. Residues aspartate 845 and histidine 878 each act as charge relay system in the active site.

It belongs to the peptidase S9B family.

It localises to the vacuole membrane. The catalysed reaction is Release of an N-terminal dipeptide, Xaa-Yaa-|-Zaa-, from a polypeptide, preferentially when Yaa is Pro, provided Zaa is neither Pro nor hydroxyproline.. Type IV dipeptidyl-peptidase which removes N-terminal dipeptides sequentially from polypeptides having unsubstituted N-termini provided that the penultimate residue is proline. In Neurospora crassa (strain ATCC 24698 / 74-OR23-1A / CBS 708.71 / DSM 1257 / FGSC 987), this protein is Probable dipeptidyl-aminopeptidase B (dapB).